The sequence spans 308 residues: Acetaldehyde dehydrogenase (308 aa).

Position 25 to 28 (25 to 28 (TGAI)) interacts with NAD(+). The Acyl-thioester intermediate role is filled by Cys-139. An NAD(+)-binding site is contributed by Asn-279.

It belongs to the acetaldehyde dehydrogenase family.

It catalyses the reaction acetaldehyde + NAD(+) + CoA = acetyl-CoA + NADH + H(+). In Streptomyces griseus subsp. griseus (strain JCM 4626 / CBS 651.72 / NBRC 13350 / KCC S-0626 / ISP 5235), this protein is Acetaldehyde dehydrogenase.